A 305-amino-acid chain; its full sequence is MELIFLGTSAGVPTRTRNVTAILLNLQHPTQSGLWLFDCGEGTQHQLLHTAFNPGKLDKIFISHLHGDHLFGLPGLLCSRSMSGIIQPLTIYGPQGIREFVETALRISGSWTDYPLEIVEIGAGEILDDGLRKVTAYPLEHPLECYGYRIEEHDKPGALNAQALKAAGVPPGPLFQELKAGKTITLEDGRQINGADYLAAPVPGKALAIFGDTGPCDAALDLAKGVDVMVHEATLDITMEAKANSRGHSSTRQAATLAREAGVGMLIITHVSSRYDDKGCQHLLRECRSIFPATELANDFTVFNV.

Zn(2+)-binding residues include H64, H66, D68, H69, H141, D212, and H270. The Proton acceptor role is filled by D68.

It belongs to the RNase Z family. RNase BN subfamily. Homodimer. It depends on Zn(2+) as a cofactor.

In terms of biological role, zinc phosphodiesterase, which has both exoribonuclease and endoribonuclease activities. The sequence is that of Ribonuclease BN from Escherichia coli O139:H28 (strain E24377A / ETEC).